The sequence spans 275 residues: Enoyl-[acyl-carrier-protein] reductase [NADH] FabI (275 aa).

NAD(+) is bound by residues G13, 19–20 (SI), 64–65 (DV), and V92. Substrate is bound at residue A95. Residues Y145 and Y155 each act as proton acceptor in the active site. Residues K162 and 191 to 195 (IRTLA) each bind NAD(+).

It belongs to the short-chain dehydrogenases/reductases (SDR) family. FabI subfamily. Homotetramer.

It catalyses the reaction a 2,3-saturated acyl-[ACP] + NAD(+) = a (2E)-enoyl-[ACP] + NADH + H(+). The protein operates within lipid metabolism; fatty acid biosynthesis. Catalyzes the reduction of a carbon-carbon double bond in an enoyl moiety that is covalently linked to an acyl carrier protein (ACP). Involved in the elongation cycle of fatty acid which are used in the lipid metabolism. The sequence is that of Enoyl-[acyl-carrier-protein] reductase [NADH] FabI (fabI) from Helicobacter pylori (strain ATCC 700392 / 26695) (Campylobacter pylori).